A 557-amino-acid polypeptide reads, in one-letter code: D-arabinono-1,4-lactone oxidase (557 aa).

The region spanning 25–209 (FLCKPQAIFQ…THVTLRTCPK (185 aa)) is the FAD-binding PCMH-type domain. Residues 58 to 61 (VGSG), 62 to 63 (HS), 144 to 148 (ISTGT), Ile-199, and 543 to 546 (LSGK) contribute to the FAD site. At His-62 the chain carries Pros-8alpha-FAD histidine.

The protein belongs to the oxygen-dependent FAD-linked oxidoreductase family. It depends on FAD as a cofactor.

The catalysed reaction is D-arabinono-1,4-lactone + O2 = dehydro-D-arabinono-1,4-lactone + H2O2 + H(+). The enzyme catalyses L-galactono-1,4-lactone + O2 = L-ascorbate + H2O2 + H(+). It carries out the reaction L-gulono-1,4-lactone + O2 = L-ascorbate + H2O2 + H(+). It catalyses the reaction L-xylono-1,4-lactone + O2 = dehydro-L-arabinono-1,4-lactone + H2O2 + H(+). The protein operates within cofactor biosynthesis; D-erythroascorbate biosynthesis; dehydro-D-arabinono-1,4-lactone from D-arabinose: step 2/2. Functionally, D-arabinono-1,4-lactone oxidase that catalyzes the final step of biosynthesis of D-erythroascorbic acid, an important antioxidant and one of the virulence factors enhancing the pathogenicity. Is also able to oxidize L-galactono-1,4-lactone, L-xylono-1,4-lactone and L-gulono-1,4-lactone. The polypeptide is D-arabinono-1,4-lactone oxidase (Candida albicans (strain SC5314 / ATCC MYA-2876) (Yeast)).